We begin with the raw amino-acid sequence, 294 residues long: UDP-3-O-acyl-N-acetylglucosamine deacetylase (294 aa).

Zn(2+)-binding residues include His75, His232, and Asp236. Catalysis depends on His259, which acts as the Proton donor.

It belongs to the LpxC family. Zn(2+) serves as cofactor.

It carries out the reaction a UDP-3-O-[(3R)-3-hydroxyacyl]-N-acetyl-alpha-D-glucosamine + H2O = a UDP-3-O-[(3R)-3-hydroxyacyl]-alpha-D-glucosamine + acetate. It participates in glycolipid biosynthesis; lipid IV(A) biosynthesis; lipid IV(A) from (3R)-3-hydroxytetradecanoyl-[acyl-carrier-protein] and UDP-N-acetyl-alpha-D-glucosamine: step 2/6. Functionally, catalyzes the hydrolysis of UDP-3-O-myristoyl-N-acetylglucosamine to form UDP-3-O-myristoylglucosamine and acetate, the committed step in lipid A biosynthesis. In Campylobacter concisus (strain 13826), this protein is UDP-3-O-acyl-N-acetylglucosamine deacetylase.